Reading from the N-terminus, the 227-residue chain is Deoxyribose-phosphate aldolase (227 aa).

D84 acts as the Proton donor/acceptor in catalysis. The Schiff-base intermediate with acetaldehyde role is filled by K146. Catalysis depends on K188, which acts as the Proton donor/acceptor.

It belongs to the DeoC/FbaB aldolase family. DeoC type 1 subfamily.

The protein resides in the cytoplasm. The catalysed reaction is 2-deoxy-D-ribose 5-phosphate = D-glyceraldehyde 3-phosphate + acetaldehyde. The protein operates within carbohydrate degradation; 2-deoxy-D-ribose 1-phosphate degradation; D-glyceraldehyde 3-phosphate and acetaldehyde from 2-deoxy-alpha-D-ribose 1-phosphate: step 2/2. In terms of biological role, catalyzes a reversible aldol reaction between acetaldehyde and D-glyceraldehyde 3-phosphate to generate 2-deoxy-D-ribose 5-phosphate. The chain is Deoxyribose-phosphate aldolase from Pyrobaculum islandicum (strain DSM 4184 / JCM 9189 / GEO3).